Here is a 441-residue protein sequence, read N- to C-terminus: tRNA modification GTPase MnmE (441 aa).

Positions 23, 81, and 121 each coordinate (6S)-5-formyl-5,6,7,8-tetrahydrofolate. A TrmE-type G domain is found at 218 to 363 (GFRVAIVGPP…LESWIAAFVS (146 aa)). A K(+)-binding site is contributed by asparagine 228. GTP-binding positions include 228 to 233 (NAGKSS), 247 to 253 (TDIAGTT), 272 to 275 (DTAG), and 326 to 329 (NKAD). Position 232 (serine 232) interacts with Mg(2+). 3 residues coordinate K(+): threonine 247, isoleucine 249, and threonine 252. Threonine 253 lines the Mg(2+) pocket. Lysine 441 contacts (6S)-5-formyl-5,6,7,8-tetrahydrofolate.

It belongs to the TRAFAC class TrmE-Era-EngA-EngB-Septin-like GTPase superfamily. TrmE GTPase family. As to quaternary structure, homodimer. Heterotetramer of two MnmE and two MnmG subunits. The cofactor is K(+).

Its subcellular location is the cytoplasm. In terms of biological role, exhibits a very high intrinsic GTPase hydrolysis rate. Involved in the addition of a carboxymethylaminomethyl (cmnm) group at the wobble position (U34) of certain tRNAs, forming tRNA-cmnm(5)s(2)U34. The polypeptide is tRNA modification GTPase MnmE (Hyphomonas neptunium (strain ATCC 15444)).